Consider the following 83-residue polypeptide: Cytochrome b559 subunit alpha (83 aa).

The chain crosses the membrane as a helical span at residues 21-35; it reads IIHTITVPMLFLAGW. Position 23 (His23) interacts with heme.

The protein belongs to the PsbE/PsbF family. As to quaternary structure, heterodimer of an alpha subunit and a beta subunit. PSII is composed of 1 copy each of membrane proteins PsbA, PsbB, PsbC, PsbD, PsbE, PsbF, PsbH, PsbI, PsbJ, PsbK, PsbL, PsbM, PsbT, PsbX, PsbY, PsbZ, Psb30/Ycf12, peripheral proteins PsbO, CyanoQ (PsbQ), PsbU, PsbV and a large number of cofactors. It forms dimeric complexes. Heme b is required as a cofactor.

The protein localises to the cellular thylakoid membrane. This b-type cytochrome is tightly associated with the reaction center of photosystem II (PSII). PSII is a light-driven water:plastoquinone oxidoreductase that uses light energy to abstract electrons from H(2)O, generating O(2) and a proton gradient subsequently used for ATP formation. It consists of a core antenna complex that captures photons, and an electron transfer chain that converts photonic excitation into a charge separation. The chain is Cytochrome b559 subunit alpha from Acaryochloris marina (strain MBIC 11017).